Reading from the N-terminus, the 144-residue chain is Large ribosomal subunit protein uL15 (144 aa).

The segment at 1 to 54 (MRLNTLSPAEGSKKAGKRLGRGIGSGLGKTGGRGHKGQKSRSGGGVRRGFEGGQ) is disordered. Positions 21–31 (RGIGSGLGKTG) are enriched in gly residues.

This sequence belongs to the universal ribosomal protein uL15 family. In terms of assembly, part of the 50S ribosomal subunit.

In terms of biological role, binds to the 23S rRNA. The protein is Large ribosomal subunit protein uL15 of Klebsiella pneumoniae (strain 342).